The sequence spans 456 residues: UDP-N-acetylmuramoylalanine--D-glutamate ligase (456 aa).

119-125 (GTNGKTT) contacts ATP.

It belongs to the MurCDEF family.

It localises to the cytoplasm. It carries out the reaction UDP-N-acetyl-alpha-D-muramoyl-L-alanine + D-glutamate + ATP = UDP-N-acetyl-alpha-D-muramoyl-L-alanyl-D-glutamate + ADP + phosphate + H(+). It participates in cell wall biogenesis; peptidoglycan biosynthesis. Its function is as follows. Cell wall formation. Catalyzes the addition of glutamate to the nucleotide precursor UDP-N-acetylmuramoyl-L-alanine (UMA). In Enterococcus faecalis (strain ATCC 700802 / V583), this protein is UDP-N-acetylmuramoylalanine--D-glutamate ligase (murD).